An 831-amino-acid chain; its full sequence is von Willebrand factor A domain-containing protein DDB_G0285981 (831 aa).

Positions 60–188 (RDTFGLKTFS…NVTIHLTIIS (129 aa)) constitute a VIT domain. The VWFA domain maps to 312-480 (EFIFLIDCSG…NFEEQVMKLV (169 aa)).

The sequence is that of von Willebrand factor A domain-containing protein DDB_G0285981 from Dictyostelium discoideum (Social amoeba).